The sequence spans 513 residues: Flagellin A (513 aa).

It belongs to the bacterial flagellin family. As to quaternary structure, heteromer of FlaA and FlaB. FlaB is located proximal to the hook while the remainder of the filament is composed of the predominant FlaA.

The protein resides in the secreted. Its subcellular location is the bacterial flagellum. In terms of biological role, flagellin is the subunit protein which polymerizes to form the filaments of bacterial flagella. Important for motility and virulence. This is Flagellin A (flaA) from Helicobacter felis (strain ATCC 49179 / CCUG 28539 / NCTC 12436 / CS1).